Reading from the N-terminus, the 476-residue chain is MASRPVTLGIDLGTTSVKAALLEAAPSLPSGFVVLASCARAARAETESAVAGPQGREQDVTRIIQALNECLDALPRQQLQRVRGIGVSGQMHGILFWKAGQGCEWMEGGPAFVFEPRAVSHLVTWQDGRCNSSFLASLPKPDSHLSVATGFGCATIFWLLKNSPEFLKSYDAAGTIQDYVVAMLCGLPRPLMSDQNAASWGYFNTQSQSWNLDTLEKAGFPIHLLPDIAEPGSMAGRTSHTWFEIPKGTQVGIALGDLQASVYSCMGQRTDAVLNISTSVQLAASMPVGFQPLQTPDPAAPVAFFPYFDRTYLGVAASLNGGNVLATFVHMLVQWMADLGLEVEESTVYSRMIQAAAQQKDTHLTITPTVLGERHLPDQLASVTRISSSDLSLGHVTRALCRGIVQNLHSMLPFQQLKEWGVARVVGSGSALSRNEVLKQEVQRAFPFPVCFGQDVDAAFGAALVMLQRDLSQKEP.

This sequence belongs to the FGGY kinase family.

Its subcellular location is the cytoplasm. The catalysed reaction is sedoheptulose + ATP = D-sedoheptulose 7-phosphate + ADP + H(+). In terms of biological role, acts as a modulator of macrophage activation through control of glucose metabolism. The chain is Sedoheptulokinase (Shpk) from Mus musculus (Mouse).